A 911-amino-acid polypeptide reads, in one-letter code: Chitin synthase G (911 aa).

Disordered regions lie at residues 1–66 (MAYQ…VSGY) and 107–138 (GRVA…GGLR). Residues 12–34 (PHYDDNGHRLQDLPHGSYEEEAS) show a composition bias toward basic and acidic residues. The span at 54–66 (QHGSSTTRPVSGY) shows a compositional bias: polar residues. The next 6 helical transmembrane spans lie at 579–599 (IFST…TTVI), 624–644 (IINT…FILA), 659–679 (SFVV…YLVV), 711–731 (IIII…FMYL), 840–860 (LVTF…SDGV), and 879–899 (ALLW…CWFL).

Belongs to the chitin synthase family. Class III subfamily.

The protein resides in the cell membrane. The catalysed reaction is [(1-&gt;4)-N-acetyl-beta-D-glucosaminyl](n) + UDP-N-acetyl-alpha-D-glucosamine = [(1-&gt;4)-N-acetyl-beta-D-glucosaminyl](n+1) + UDP + H(+). Functionally, polymerizes chitin, a structural polymer of the cell wall and septum, by transferring the sugar moiety of UDP-GlcNAc to the non-reducing end of the growing chitin polymer. This Aspergillus fumigatus (strain ATCC MYA-4609 / CBS 101355 / FGSC A1100 / Af293) (Neosartorya fumigata) protein is Chitin synthase G (chsG).